The sequence spans 267 residues: Tryptophan synthase alpha chain (267 aa).

Active-site proton acceptor residues include Glu49 and Asp60.

This sequence belongs to the TrpA family. Tetramer of two alpha and two beta chains.

It catalyses the reaction (1S,2R)-1-C-(indol-3-yl)glycerol 3-phosphate + L-serine = D-glyceraldehyde 3-phosphate + L-tryptophan + H2O. The protein operates within amino-acid biosynthesis; L-tryptophan biosynthesis; L-tryptophan from chorismate: step 5/5. The alpha subunit is responsible for the aldol cleavage of indoleglycerol phosphate to indole and glyceraldehyde 3-phosphate. The chain is Tryptophan synthase alpha chain from Chloroflexus aggregans (strain MD-66 / DSM 9485).